We begin with the raw amino-acid sequence, 184 residues long: Interferon alpha-3 (184 aa).

Residues 1–23 (MALPVSLLMALVVLSCHSSCSLG) form the signal peptide. 2 disulfides stabilise this stretch: C24–C122 and C52–C162.

Belongs to the alpha/beta interferon family.

The protein resides in the secreted. In terms of biological role, produced by macrophages, IFN-alpha have antiviral activities. Interferon stimulates the production of two enzymes: a protein kinase and an oligoadenylate synthetase. This Equus caballus (Horse) protein is Interferon alpha-3.